The primary structure comprises 277 residues: Phosphonoacetaldehyde hydrolase-like protein (277 aa).

This sequence belongs to the HAD-like hydrolase superfamily. PhnX family.

In Syntrophobacter fumaroxidans (strain DSM 10017 / MPOB), this protein is Phosphonoacetaldehyde hydrolase-like protein (phnX2).